We begin with the raw amino-acid sequence, 468 residues long: Sorting and assembly machinery component 50 homolog A (468 aa).

A disordered region spans residues 1-24; the sequence is MGTVHARSLDPLPMNGPDFGSPDD. The POTRA domain occupies 44–124; sequence VVVQRVHFEG…LDVTFEVTEL (81 aa).

Belongs to the SAM50/omp85 family. Associates with the mitochondrial contact site and cristae organizing system (MICOS) complex (also known as MINOS or MitOS complex).

The protein localises to the mitochondrion outer membrane. In terms of biological role, may play a role in the maintenance of the structure of mitochondrial cristae. The protein is Sorting and assembly machinery component 50 homolog A (samm50-a) of Xenopus laevis (African clawed frog).